Reading from the N-terminus, the 244-residue chain is Ribosome-inactivating protein cucurmosin (244 aa).

Catalysis depends on residues Y70, Y109, E158, and R161. N-linked (GlcNAc...) asparagine glycosylation is found at N189 and N225.

This sequence belongs to the ribosome-inactivating protein family. Type 1 RIP subfamily. The N-linked glycan consists of GlcNAc2Man3Xyl.

It catalyses the reaction Endohydrolysis of the N-glycosidic bond at one specific adenosine on the 28S rRNA.. Its function is as follows. Has cytotoxic activity towards cancer cells, but not normal cells. Inhibits the growth of the human leukemia cell line K562, the murine melanoma cell line B16 and the lung adenocarcinoma cell line A549 with IC(50) values of 88.1 nM, 63.4 nM and 359.3 nM respectively. The protein is Ribosome-inactivating protein cucurmosin of Cucurbita moschata (Winter crookneck squash).